The following is a 329-amino-acid chain: Homeobox protein Nkx-3.2 (329 aa).

A disordered region spans residues 107-188; sequence GLGSPCGGAP…PDPSPPDEDP (82 aa). Residues 110–124 show a composition bias toward gly residues; the sequence is SPCGGAPGAGAGGEP. Basic and acidic residues predominate over residues 138–160; that stretch reads ELGRPGDIGERKKQRPLEARAKG. A DNA-binding region (homeobox) is located at residues 202–261; it reads KKRSRAAFSHAQVFELERRFNHQRYLSGPERADLAASLKLTETQVKIWFQNRRYKTKRRQ.

Belongs to the NK-3 homeobox family. As to expression, first expressed in developing facial cartilage in early tailbud embryos, with expression localized to the basihyobranchial, palatoquadrate and possibly Meckel's cartilages. Shortly after, a second area of expression is seen in the musculature of the anterior gut. During late embryogenesis, gut expression extends into hindgut tissues. In adults, expressed at a high level in the kidney, pancreas, spleen and stomach and at a slightly lower level in the intestine, skeletal muscle and tongue. Adult heart, liver and lung show little or no expression.

Its subcellular location is the nucleus. The sequence is that of Homeobox protein Nkx-3.2 (nkx3-2) from Xenopus laevis (African clawed frog).